Consider the following 219-residue polypeptide: Uracil-DNA glycosylase (219 aa).

Residue aspartate 61 is the Proton acceptor of the active site.

It belongs to the uracil-DNA glycosylase (UDG) superfamily. UNG family.

The protein localises to the cytoplasm. The enzyme catalyses Hydrolyzes single-stranded DNA or mismatched double-stranded DNA and polynucleotides, releasing free uracil.. Functionally, excises uracil residues from the DNA which can arise as a result of misincorporation of dUMP residues by DNA polymerase or due to deamination of cytosine. This Neisseria meningitidis serogroup C (strain 053442) protein is Uracil-DNA glycosylase.